Consider the following 288-residue polypeptide: MKVKILVDSTADVPFSWMEKYDIDSIPLYVVWEDGRSEPDEREPEEIMNFYKRIREAGSVPKTSQPSVEDFKKRYLKYKEEDYDVVLVLTLSSKLSGTYNSAVLASKEVDIPVYVVDTLLASGAIPLPARVAREMLENGATIEEVLKKLDERMKNKDFKAIFYVSNFDYLVKGGRVSKFQGFVGNLLKIRVCLHIENGELIPYRKVRGDKKAIEALIEKLREDTPEGSKLRVIGVHADNEAGVVELLNTLRKSYEVVDEIISPMGKVITTHVGPGTVGFGIEVLERKR.

The DegV domain maps to 3-283 (VKILVDSTAD…PGTVGFGIEV (281 aa)). T63 and S96 together coordinate hexadecanoate.

As to quaternary structure, monomer.

In terms of biological role, binds long-chain fatty acids, such as palmitate, and may play a role in lipid transport or fatty acid metabolism. This Thermotoga maritima (strain ATCC 43589 / DSM 3109 / JCM 10099 / NBRC 100826 / MSB8) protein is Fatty acid-binding protein TM_1468.